The sequence spans 223 residues: RNA-free ribonuclease P (223 aa).

The protein belongs to the HARP family.

The catalysed reaction is Endonucleolytic cleavage of RNA, removing 5'-extranucleotides from tRNA precursor.. Its function is as follows. RNA-free RNase P that catalyzes the removal of the 5'-leader sequence from pre-tRNA to produce the mature 5'-terminus. This Methanococcus maripaludis (strain C7 / ATCC BAA-1331) protein is RNA-free ribonuclease P.